A 427-amino-acid polypeptide reads, in one-letter code: UPF0597 protein CPR_0790 (427 aa).

Belongs to the UPF0597 family.

This is UPF0597 protein CPR_0790 from Clostridium perfringens (strain SM101 / Type A).